Here is a 214-residue protein sequence, read N- to C-terminus: 3,4-dihydroxy-2-butanone 4-phosphate synthase (214 aa).

D-ribulose 5-phosphate-binding positions include 37-38, aspartate 42, 150-154, and glutamate 174; these read RE and RRGHT. Glutamate 38 is a Mg(2+) binding site. Histidine 153 lines the Mg(2+) pocket.

The protein belongs to the DHBP synthase family. Homodimer. Requires Mg(2+) as cofactor. The cofactor is Mn(2+).

The enzyme catalyses D-ribulose 5-phosphate = (2S)-2-hydroxy-3-oxobutyl phosphate + formate + H(+). Its pathway is cofactor biosynthesis; riboflavin biosynthesis; 2-hydroxy-3-oxobutyl phosphate from D-ribulose 5-phosphate: step 1/1. Its function is as follows. Catalyzes the conversion of D-ribulose 5-phosphate to formate and 3,4-dihydroxy-2-butanone 4-phosphate. The protein is 3,4-dihydroxy-2-butanone 4-phosphate synthase of Desulfotalea psychrophila (strain LSv54 / DSM 12343).